The sequence spans 245 residues: MNRCWALFLSLCCYLRLVSAEGDPIPEELYKMLSDHSIRSFDDLQRLLHGDSVDEDRAELDLNSTRSHCGGELESLSRGRRSLGEAAGSPTVAEPAMIAECKTRTEVFEVSRRLIDRTNANFLVWPPCVEVQRCSGCCNNRNVQCRPTQVQLRLVQVRKIEIVRKRPVFKKATVTLEDHLACKCETVVAARPVTRSPGSSQEQRARTPQTRVTIRTVRVRRPPKGKHQKFKHTHDKKALKETLGA.

The N-terminal stretch at 1-20 (MNRCWALFLSLCCYLRLVSA) is a signal peptide. A propeptide spans 21–81 (EGDPIPEELY…ELESLSRGRR (61 aa)) (removed in mature form). The N-linked (GlcNAc...) asparagine glycan is linked to asparagine 63. Disulfide bonds link cysteine 101–cysteine 145, cysteine 134–cysteine 182, and cysteine 138–cysteine 184. Positions 195–245 (RSPGSSQEQRARTPQTRVTIRTVRVRRPPKGKHQKFKHTHDKKALKETLGA) are cleaved as a propeptide — removed in mature form. The span at 220 to 235 (RRPPKGKHQKFKHTHD) shows a compositional bias: basic residues. Positions 220–245 (RRPPKGKHQKFKHTHDKKALKETLGA) are disordered. A compositionally biased stretch (basic and acidic residues) spans 236–245 (KKALKETLGA).

This sequence belongs to the PDGF/VEGF growth factor family. In terms of assembly, antiparallel homodimer; disulfide-linked. Antiparallel heterodimer with PDGFA; disulfide-linked. The PDGFB homodimer interacts with PDGFRA and PDGFRB homodimers, and with heterodimers formed by PDGFRA and PDGFRB. The heterodimer composed of PDGFA and PDGFB interacts with PDGFRB homodimers, and with heterodimers formed by PDGFRA and PDGFRB. Interacts with XLKD1. Interacts with LRP1. Interacts with SORL1 (via the N-terminal ectodomain). Interacts with CD82; this interaction inhibits PDGFB-mediated signaling pathway.

The protein localises to the secreted. Growth factor that plays an essential role in the regulation of embryonic development, cell proliferation, cell migration, survival and chemotaxis. Potent mitogen for cells of mesenchymal origin. Required for normal proliferation and recruitment of pericytes and vascular smooth muscle cells in the central nervous system, skin, lung, heart and placenta. Required for normal blood vessel development, and for normal development of kidney glomeruli. Plays an important role in wound healing. Signaling is modulated by the formation of heterodimers with PDGFA. This chain is Platelet-derived growth factor subunit B (PDGFB), found in Felis catus (Cat).